Here is a 319-residue protein sequence, read N- to C-terminus: 2-dehydropantoate 2-reductase (319 aa).

NADP(+) is bound by residues 10-15 (GTGALG) and Asn105. Substrate is bound at residue Asn105. Catalysis depends on Lys192, which acts as the Proton donor. Substrate contacts are provided by Asn196, Asn200, and Ser262. Residue Glu274 participates in NADP(+) binding.

Belongs to the ketopantoate reductase family.

It is found in the cytoplasm. It catalyses the reaction (R)-pantoate + NADP(+) = 2-dehydropantoate + NADPH + H(+). The protein operates within cofactor biosynthesis; (R)-pantothenate biosynthesis; (R)-pantoate from 3-methyl-2-oxobutanoate: step 2/2. In terms of biological role, catalyzes the NADPH-dependent reduction of ketopantoate into pantoic acid. The sequence is that of 2-dehydropantoate 2-reductase from Nostoc sp. (strain PCC 7120 / SAG 25.82 / UTEX 2576).